The chain runs to 2126 residues: Polycystin family receptor for egg jelly (2126 aa).

The first 18 residues, 1–18, serve as a signal peptide directing secretion; sequence MWPGPALLLLGLGLGLGS. The Extracellular portion of the chain corresponds to 19–1068; that stretch reads QPPPTGPRGL…AIISNLTQNP (1050 aa). The tract at residues 20 to 71 is disordered; that stretch reads PPPTGPRGLPGVLRGAPGLGQGAESSVRGGDTGGLSPRAAPRHASPTPPRRC. Asn84, Asn94, Asn129, Asn192, Asn243, Asn325, Asn571, Asn761, Asn774, Asn807, Asn849, Asn888, Asn960, and Asn1063 each carry an N-linked (GlcNAc...) asparagine glycan. An REJ domain is found at 102–797; the sequence is CIMQPVKINR…SMMFCEFADD (696 aa). Residues 1069 to 1089 form a helical membrane-spanning segment; it reads ATFLAVLFIMILYAILAFWAL. Residues 1090 to 1273 lie on the Cytoplasmic side of the membrane; it reads HRDVIDLYFR…VPKPFNRLQR (184 aa). Positions 1114-1231 constitute a PLAT domain; sequence LCYLVTIFTG…TLDATFSVTN (118 aa). A helical membrane pass occupies residues 1274 to 1294; that stretch reads LSCCLAMLLSSLVCNIMFFNL. Residues 1295 to 1311 lie on the Extracellular side of the membrane; sequence NQKEKIESRHMHIIRSM. Residues 1312–1332 form a helical membrane-spanning segment; the sequence is LIGIESVVITIPVQLLITFFF. The Cytoplasmic portion of the chain corresponds to 1333-1449; sequence TYSQKNLKMN…KTQIILPRWC (117 aa). The tract at residues 1379 to 1431 is disordered; it reads RAAVSTSAPEEKEAFETSQKHEKADTQMSNKNSSNNNQEASEGVPPKAFSSQP. Basic and acidic residues predominate over residues 1387–1403; that stretch reads PEEKEAFETSQKHEKAD. The chain crosses the membrane as a helical span at residues 1450–1470; that stretch reads VYIAWFLVFATSGISSFFIVF. Residues 1471 to 1483 lie on the Extracellular side of the membrane; the sequence is YGVTYGYAKSIEW. Residues 1484-1504 form a helical membrane-spanning segment; the sequence is LFASFCSFCQSVFLVQPCNIL. The Cytoplasmic portion of the chain corresponds to 1505–1580; the sequence is LRSGTRSYKP…RRENRIRRRS (76 aa). A helical membrane pass occupies residues 1581–1601; sequence FLFLSYLVTHFIFLTLLLLLI. Topologically, residues 1602–1838 are extracellular; it reads FSLRHNDSFY…DFNRKTSSEI (237 aa). N-linked (GlcNAc...) asparagine glycosylation is found at Asn1607, Asn1676, Asn1766, and Asn1817. The helical transmembrane segment at 1839–1859 threads the bilayer; the sequence is YLYAAILIFFCAYVVDEGYII. Over 1860–1875 the chain is Cytoplasmic; the sequence is RQERASYIRSVYNLLN. Residues 1876 to 1896 traverse the membrane as a helical segment; that stretch reads FSLKCMFALLIVLFFWKYFLA. Topologically, residues 1897-1918 are extracellular; the sequence is TKMVQLYLADPEAFIPFHAVSR. A helical membrane pass occupies residues 1919-1939; that stretch reads VDHFMRIILAFLLFLTILKTL. The Cytoplasmic portion of the chain corresponds to 1940 to 1964; sequence RYSRFFYNVRLAQKAIQAALPGICH. Residues 1965 to 1985 traverse the membrane as a helical segment; the sequence is TALVVSIYSFMYVAFGYLVFG. At 1986 to 2019 the chain is on the extracellular side; sequence QHEWNYSNMIHATQTIFSYCVSAFQNTEFSGNKV. Residues 2020 to 2040 traverse the membrane as a helical segment; it reads LGVLFLSSFMLVMICIFINLF. Over 2041 to 2126 the chain is Cytoplasmic; that stretch reads QAVILSAYDE…NGKKMIYLVV (86 aa).

It belongs to the polycystin family. As to expression, exclusively expressed in testis.

Its subcellular location is the cell membrane. The protein resides in the cytoplasmic vesicle. The protein localises to the secretory vesicle. It is found in the acrosome membrane. It localises to the nucleus. Its function is as follows. Testis-specific protein that controls sperm transport and the timing of zona pellucida-evoked exocytosis of the sperm acrosome. The protein is Polycystin family receptor for egg jelly (Pkdrej) of Mus musculus (Mouse).